The chain runs to 31 residues: U14-ctenitoxin-Co1c (31 aa).

In terms of tissue distribution, expressed by the venom gland.

It is found in the secreted. Not toxic to mice by intracerebroventricular injection. In Ctenus ornatus (Brazilian spider), this protein is U14-ctenitoxin-Co1c.